A 368-amino-acid polypeptide reads, in one-letter code: Glutamate 5-kinase (368 aa).

Lysine 18 lines the ATP pocket. Substrate is bound by residues serine 58, aspartate 145, and asparagine 157. Residues serine 177–aspartate 178 and threonine 218–lysine 224 contribute to the ATP site. In terms of domain architecture, PUA spans alanine 280–proline 358.

The protein belongs to the glutamate 5-kinase family.

Its subcellular location is the cytoplasm. It carries out the reaction L-glutamate + ATP = L-glutamyl 5-phosphate + ADP. Its pathway is amino-acid biosynthesis; L-proline biosynthesis; L-glutamate 5-semialdehyde from L-glutamate: step 1/2. Catalyzes the transfer of a phosphate group to glutamate to form L-glutamate 5-phosphate. The sequence is that of Glutamate 5-kinase from Mycobacterium ulcerans (strain Agy99).